The following is a 377-amino-acid chain: MNVEQYTQVTTDFEKTLTKEKKSKQGIFFTPKTVREKLFGFTEHFQNTPGFSILEPSCGTGEIISECVERFPLASIKGVELDNDMSTICSKKYAEYNVDIVNEDFLLWKGGKFDFIVGNPPYVVRPSGYKNDNRIAKGRSNLYVEFLYKCITEHLKEDGILAFIIPSTIGNSSFYEPIRKLIITLDILSFEILDKHDFCDTNTRLCSIVIKNSPGTGKYTYRDYICDKDIPHHGNSYIGSLDLKFKTGFAWANVNKFFTDKSEIPFFTSSNIKLNEIHIGDKMKYLTQDTTKFFTGKALLIKTASAGKRGGRFEFGFSLYENDKWAVDNDIIVIQGPDTVLSIVQDVLMKDVTNEFINILVNNGHISMKLLKSIPLF.

The protein belongs to the N(4)/N(6)-methyltransferase family.

The enzyme catalyses a 2'-deoxyadenosine in DNA + S-adenosyl-L-methionine = an N(6)-methyl-2'-deoxyadenosine in DNA + S-adenosyl-L-homocysteine + H(+). A gamma subtype methylase that recognizes the double-stranded sequence 5'-TCGA-3' and methylates A-4 on both strands. The protein is Modification methylase CviBIII (CVIBIIIM) of Paramecium bursaria Chlorella virus NC1A (PBCV-NC1A).